A 275-amino-acid polypeptide reads, in one-letter code: NH(3)-dependent NAD(+) synthetase (275 aa).

50-57 (GISGGVDS) provides a ligand contact to ATP. Asp-56 serves as a coordination point for Mg(2+). Position 147 (Arg-147) interacts with deamido-NAD(+). Residue Thr-167 participates in ATP binding. A Mg(2+)-binding site is contributed by Glu-172. Residues Lys-180 and Asp-187 each contribute to the deamido-NAD(+) site. Residues Lys-196 and Thr-218 each contribute to the ATP site. Residue 267 to 268 (HK) coordinates deamido-NAD(+).

The protein belongs to the NAD synthetase family. As to quaternary structure, homodimer.

The enzyme catalyses deamido-NAD(+) + NH4(+) + ATP = AMP + diphosphate + NAD(+) + H(+). It functions in the pathway cofactor biosynthesis; NAD(+) biosynthesis; NAD(+) from deamido-NAD(+) (ammonia route): step 1/1. Catalyzes the ATP-dependent amidation of deamido-NAD to form NAD. Uses ammonia as a nitrogen source. In Ectopseudomonas mendocina (strain ymp) (Pseudomonas mendocina), this protein is NH(3)-dependent NAD(+) synthetase.